The following is a 255-amino-acid chain: NAD(P)H-quinone oxidoreductase subunit K, chloroplastic (255 aa).

[4Fe-4S] cluster contacts are provided by cysteine 47, cysteine 48, cysteine 112, and cysteine 143.

The protein belongs to the complex I 20 kDa subunit family. NDH is composed of at least 16 different subunits, 5 of which are encoded in the nucleus. The cofactor is [4Fe-4S] cluster.

It is found in the plastid. The protein resides in the chloroplast thylakoid membrane. It catalyses the reaction a plastoquinone + NADH + (n+1) H(+)(in) = a plastoquinol + NAD(+) + n H(+)(out). The catalysed reaction is a plastoquinone + NADPH + (n+1) H(+)(in) = a plastoquinol + NADP(+) + n H(+)(out). In terms of biological role, NDH shuttles electrons from NAD(P)H:plastoquinone, via FMN and iron-sulfur (Fe-S) centers, to quinones in the photosynthetic chain and possibly in a chloroplast respiratory chain. The immediate electron acceptor for the enzyme in this species is believed to be plastoquinone. Couples the redox reaction to proton translocation, and thus conserves the redox energy in a proton gradient. The polypeptide is NAD(P)H-quinone oxidoreductase subunit K, chloroplastic (Zygnema circumcarinatum (Green alga)).